The chain runs to 302 residues: Lactoylglutathione lyase (302 aa).

VOC domains are found at residues 11 to 153 (KLNH…LVSQ) and 166 to 301 (RFNH…VIEQ). H14 lines the Zn(2+) pocket. R18 is a binding site for substrate. Position 75 (E75) interacts with Zn(2+). Substrate-binding residues include N79, R99, and H103. Zn(2+) is bound by residues H103 and E149. The Proton donor/acceptor role is filled by E149.

Belongs to the glyoxalase I family. As to quaternary structure, monomer. It depends on Zn(2+) as a cofactor. The cofactor is Cu(2+). Ni(2+) is required as a cofactor. Requires Mn(2+) as cofactor.

It carries out the reaction (R)-S-lactoylglutathione = methylglyoxal + glutathione. Its pathway is secondary metabolite metabolism; methylglyoxal degradation; (R)-lactate from methylglyoxal: step 1/2. Catalyzes the conversion of hemimercaptal, formed from methylglyoxal and glutathione, to S-lactoylglutathione. This Schizosaccharomyces pombe (strain 972 / ATCC 24843) (Fission yeast) protein is Lactoylglutathione lyase (glo1).